A 205-amino-acid polypeptide reads, in one-letter code: ESCRT-related protein CHMP1 (205 aa).

2 coiled-coil regions span residues 13 to 51 and 109 to 140; these read DLKFTSKSLQRQARKCEKEEKEQKLKVKKAIEKGNMDGA and GNLQKMSETMDNFERQFVNMEVQAEFMEGAMA.

The protein belongs to the SNF7 family.

The protein resides in the cytoplasm. It is found in the endosome membrane. Involved in ESCRT-dependent multivesicular body (MVB) formation and sorting of endosomal cargo proteins into MVBs. The chain is ESCRT-related protein CHMP1 from Oryza sativa subsp. japonica (Rice).